A 340-amino-acid chain; its full sequence is MGASPSRPLEQSPSSSEGENHRVKYASYTTQGFRPHMEDALAVELDLDATTSFFGVYDGHGGAEVAMYCAKRFHTMLLEDVDYINNLPNAITSVCFRLDDDLQRSNEWRESLNPCANRNCLTNICANLHHFTEDYVPPSYEGSTACVVIIRGNQIIVGNVGDSRCVLSKNGQAISLSFDHKPHHEAERERIQRAGGHVFLQRILGMLATSRAIGDFAYKQNRNMPPSQQMVTCVPDIRVENITDDTEFLVIASDGVWDGMRNNNVVQFVRQELRPGEENLRETCEKLVGHCLHSNDNATAILVKFKPIEEDPDEVASARDEHQHNPEGGDEKLDINNDND.

Residues 1–21 (MGASPSRPLEQSPSSSEGENH) form a disordered region. Residues 24-305 (KYASYTTQGF…DNATAILVKF (282 aa)) form the PPM-type phosphatase domain. 4 residues coordinate Mn(2+): Asp58, Gly59, Asp254, and Asp296. Residues 311-340 (DPDEVASARDEHQHNPEGGDEKLDINNDND) are disordered. Residues 316 to 340 (ASARDEHQHNPEGGDEKLDINNDND) are compositionally biased toward basic and acidic residues.

Belongs to the PP2C family. Mg(2+) serves as cofactor. Mn(2+) is required as a cofactor.

The catalysed reaction is O-phospho-L-seryl-[protein] + H2O = L-seryl-[protein] + phosphate. The enzyme catalyses O-phospho-L-threonyl-[protein] + H2O = L-threonyl-[protein] + phosphate. In Oryza sativa subsp. japonica (Rice), this protein is Probable protein phosphatase 2C 21.